The following is a 534-amino-acid chain: Unguisins hydrolase ungD' (534 aa).

The protein belongs to the peptidase S12 family.

It participates in secondary metabolite biosynthesis. Its function is as follows. Hydrolase; part of the gene cluster that mediates the biosynthesis of the unguisins, gamma-aminobutyric acid (GABA)-containing fungal cyclic heptapeptides with the amino acid sequence cyclo-(D-Ala1-D-Val2-L-Leu3-beta-MePhe4-D-Ala5-D-Trp6-GABA7) for unguisin H and cyclo-(D-Ala1-D-Ala2-L-Leu3-beta-MePhe4-D-Ala5-D-Trp6-GABA7) for unguisin I. Within the pathway, the hydrolase ungD' catalyzes the hydrolysis between the D-tryptophan and GABA residues of unguisins H and I to produce the corresponding linear peptides. The alanine racemase ungC' catalyzes the interconversion of L-alanine and D-alanine, providing the D-alanine which is accepted by the first adenylation domain of the nonribosomal peptide synthetase (NRPS) ungA', whereas the methyltransferase ungE' provides the (2R,3R)-beta-methylphenylalanine residue incorporated by the module 4. UngA' is the main enzyme within the cluster which condenses the 7 residues using its respective 7 modules. The terminal condensation domain (Ct) is involved in cyclization with D-alanine and thereby releasing of unguisins H and I. In Aspergillus campestris (strain IBT 28561), this protein is Unguisins hydrolase ungD'.